Reading from the N-terminus, the 168-residue chain is uncharacterized protein (168 aa).

Residues 1 to 15 (MKEASDREEAPKMVE) are compositionally biased toward basic and acidic residues. The tract at residues 1–36 (MKEASDREEAPKMVEKNYSTGFRKAHGEKDQSVTKP) is disordered.

It is found in the cytoplasm. This is an uncharacterized protein from Saccharomyces cerevisiae (strain ATCC 204508 / S288c) (Baker's yeast).